A 453-amino-acid chain; its full sequence is Pup--protein ligase (453 aa).

Mg(2+) is bound at residue glutamate 9. ATP is bound at residue arginine 53. Position 55 (tyrosine 55) interacts with Mg(2+). The active-site Proton acceptor is aspartate 57. Residue glutamate 63 coordinates Mg(2+). Residues threonine 66 and tryptophan 420 each coordinate ATP.

This sequence belongs to the Pup ligase/Pup deamidase family. Pup-conjugating enzyme subfamily.

It catalyses the reaction ATP + [prokaryotic ubiquitin-like protein]-L-glutamate + [protein]-L-lysine = ADP + phosphate + N(6)-([prokaryotic ubiquitin-like protein]-gamma-L-glutamyl)-[protein]-L-lysine.. It functions in the pathway protein degradation; proteasomal Pup-dependent pathway. Its pathway is protein modification; protein pupylation. Catalyzes the covalent attachment of the prokaryotic ubiquitin-like protein modifier Pup to the proteasomal substrate proteins, thereby targeting them for proteasomal degradation. This tagging system is termed pupylation. The ligation reaction involves the side-chain carboxylate of the C-terminal glutamate of Pup and the side-chain amino group of a substrate lysine. The chain is Pup--protein ligase from Kineococcus radiotolerans (strain ATCC BAA-149 / DSM 14245 / SRS30216).